We begin with the raw amino-acid sequence, 371 residues long: O-phospho-L-seryl-tRNA:Cys-tRNA synthase 1 (371 aa).

Pyridoxal 5'-phosphate-binding positions include 78–79 (AR), asparagine 183, and 206–208 (SGH). Lysine 209 bears the N6-(pyridoxal phosphate)lysine mark.

Belongs to the SepCysS family. As to quaternary structure, homodimer. Probably interacts with SepRS. The cofactor is pyridoxal 5'-phosphate.

It catalyses the reaction O-phospho-L-seryl-tRNA(Cys) + hydrogen sulfide + H(+) = L-cysteinyl-tRNA(Cys) + phosphate. Its function is as follows. Converts O-phospho-L-seryl-tRNA(Cys) (Sep-tRNA(Cys)) to L-cysteinyl-tRNA(Cys) (Cys-tRNA(Cys)). This chain is O-phospho-L-seryl-tRNA:Cys-tRNA synthase 1, found in Archaeoglobus fulgidus (strain ATCC 49558 / DSM 4304 / JCM 9628 / NBRC 100126 / VC-16).